Consider the following 486-residue polypeptide: Glutamate--tRNA ligase (486 aa).

The 'HIGH' region motif lies at 11–21; sequence PSPTGLLHIGN. Positions 255-259 match the 'KMSKS' region motif; sequence KLSKR. K258 provides a ligand contact to ATP.

Belongs to the class-I aminoacyl-tRNA synthetase family. Glutamate--tRNA ligase type 1 subfamily. In terms of assembly, monomer.

It localises to the cytoplasm. It carries out the reaction tRNA(Glu) + L-glutamate + ATP = L-glutamyl-tRNA(Glu) + AMP + diphosphate. Functionally, catalyzes the attachment of glutamate to tRNA(Glu) in a two-step reaction: glutamate is first activated by ATP to form Glu-AMP and then transferred to the acceptor end of tRNA(Glu). This Streptococcus pneumoniae (strain ATCC BAA-255 / R6) protein is Glutamate--tRNA ligase.